The chain runs to 244 residues: Methanethiol S-methyltransferase (244 aa).

The next 5 helical transmembrane spans lie at 7–27 (IIYGAASYLVFLVAFGYAIGF), 41–61 (IAAPIGQAVVVNLVLLGVFAV), 90–110 (LLASVALLLLYWQWRTMPAVI), 120–140 (VALWALFWLGWATVLTSTFMI), and 181–201 (GFVVAFWATPMMTAGHLLFAI).

The protein belongs to the nurim family.

It localises to the membrane. The enzyme catalyses methanethiol + S-adenosyl-L-methionine = dimethyl sulfide + S-adenosyl-L-homocysteine + H(+). Functionally, catalyzes the methylation of methanethiol (MeSH) to yield dimethylsulphide (DMS). The chain is Methanethiol S-methyltransferase from Mycobacterium tuberculosis (strain ATCC 25618 / H37Rv).